We begin with the raw amino-acid sequence, 1293 residues long: Phosphoribosylformylglycinamidine synthase (1293 aa).

Residues Gly-305–Asp-316 and Ala-676 each bind ATP. The disordered stretch occupies residues Gly-305–Ala-328. 4 residues coordinate Mg(2+): Asp-677, Glu-716, Asn-720, and Asp-884. Residue Ser-886 coordinates ATP. The region spanning Met-1040–Gly-1293 is the Glutamine amidotransferase type-1 domain. Cys-1133 functions as the Nucleophile in the catalytic mechanism. Active-site residues include His-1258 and Glu-1260.

It in the N-terminal section; belongs to the FGAMS family. Monomer.

The protein localises to the cytoplasm. The enzyme catalyses N(2)-formyl-N(1)-(5-phospho-beta-D-ribosyl)glycinamide + L-glutamine + ATP + H2O = 2-formamido-N(1)-(5-O-phospho-beta-D-ribosyl)acetamidine + L-glutamate + ADP + phosphate + H(+). The protein operates within purine metabolism; IMP biosynthesis via de novo pathway; 5-amino-1-(5-phospho-D-ribosyl)imidazole from N(2)-formyl-N(1)-(5-phospho-D-ribosyl)glycinamide: step 1/2. Its function is as follows. Phosphoribosylformylglycinamidine synthase involved in the purines biosynthetic pathway. Catalyzes the ATP-dependent conversion of formylglycinamide ribonucleotide (FGAR) and glutamine to yield formylglycinamidine ribonucleotide (FGAM) and glutamate. The chain is Phosphoribosylformylglycinamidine synthase from Shewanella sp. (strain MR-7).